We begin with the raw amino-acid sequence, 328 residues long: TSTSYPSIVGEMLASGFGVIGFSWICSPACTELEVVVMDWLAKFLKPPAHFQHASDGPGGGVIQGSASEAVLVAVLAAREQAVASYRESHPELSESEVRGRLVAYSSDQSNSCIEKAGVLAAMPIRLLPAGEDFVLRGDTLRGAIEEDVAAGRIPVICVATLGTTGTCAYDDIESLSAVCEEFKVWLHVDAAYAGGAFALEECSDLRKGLDRVDSLNFNLHKFMLVNFDCSAMWLRDANKVVDSFNVDRIYLKHKHEGQSQIPDFRHWQIPLGRRFRALKVWITFRTLGAEGLRNHVRKHIELAKQFEQLVLKDSRFELVAPSALGLV.

Asn111 is an active-site residue. Lys222 bears the N6-(pyridoxal phosphate)lysine mark.

It belongs to the group II decarboxylase family. Pyridoxal 5'-phosphate is required as a cofactor.

The catalysed reaction is L-dopa + O2 + H2O + H(+) = 3,4-dihydroxyphenylacetaldehyde + H2O2 + NH4(+) + CO2. In terms of biological role, catalyzes the decarboxylation-oxidative deamination of L-3,4-dihydroxyphenylalanine (L-DOPA) to 3,4-dihydroxylphenylacetaldehyde (DHPAA). Involved in cuticle development. Probably responsible for the protein cross-linking during the development of flexible cuticles. This chain is 3,4-dihydroxyphenylacetaldehyde synthase 2 (amd), found in Drosophila simulans (Fruit fly).